The sequence spans 424 residues: Phosphoribosylamine--glycine ligase (424 aa).

An ATP-grasp domain is found at 107-313 (KTFMKKYGIP…FLETLLNFYE (207 aa)). 133–194 (VEKVGAPIVV…EEFLEGEEAS (62 aa)) is a binding site for ATP. Glu-283 and Asn-285 together coordinate Mg(2+).

The protein belongs to the GARS family. Mg(2+) serves as cofactor. Mn(2+) is required as a cofactor.

The catalysed reaction is 5-phospho-beta-D-ribosylamine + glycine + ATP = N(1)-(5-phospho-beta-D-ribosyl)glycinamide + ADP + phosphate + H(+). Its pathway is purine metabolism; IMP biosynthesis via de novo pathway; N(1)-(5-phospho-D-ribosyl)glycinamide from 5-phospho-alpha-D-ribose 1-diphosphate: step 2/2. This chain is Phosphoribosylamine--glycine ligase, found in Aquifex aeolicus (strain VF5).